The primary structure comprises 490 residues: 4-hydroxyphenylacetaldehyde synthase (490 aa).

The L-phenylalanine site is built by P97, H198, and H313. The residue at position 314 (K314) is an N6-(pyridoxal phosphate)lysine. F343 is a binding site for L-phenylalanine.

This sequence belongs to the group II decarboxylase family. In terms of assembly, homodimer. The cofactor is pyridoxal 5'-phosphate.

It carries out the reaction L-tyrosine + O2 + H2O + H(+) = (4-hydroxyphenyl)acetaldehyde + H2O2 + NH4(+) + CO2. Functionally, catalyzes the production of 4-hydroxyphenylacetaldehyde (HPAA) directly from L-tyrosine, tyramine not being formed as an intermediate. The chain is 4-hydroxyphenylacetaldehyde synthase from Rhodiola rosea (Roseroot).